A 361-amino-acid chain; its full sequence is Phosphoserine aminotransferase (361 aa).

Arg42 is a binding site for L-glutamate. Pyridoxal 5'-phosphate-binding positions include 76–77 (AS), Trp102, Thr152, Asp172, and Gln195. Lys196 is subject to N6-(pyridoxal phosphate)lysine. 237–238 (NT) provides a ligand contact to pyridoxal 5'-phosphate.

This sequence belongs to the class-V pyridoxal-phosphate-dependent aminotransferase family. SerC subfamily. Homodimer. It depends on pyridoxal 5'-phosphate as a cofactor.

It localises to the cytoplasm. It catalyses the reaction O-phospho-L-serine + 2-oxoglutarate = 3-phosphooxypyruvate + L-glutamate. The catalysed reaction is 4-(phosphooxy)-L-threonine + 2-oxoglutarate = (R)-3-hydroxy-2-oxo-4-phosphooxybutanoate + L-glutamate. The protein operates within amino-acid biosynthesis; L-serine biosynthesis; L-serine from 3-phospho-D-glycerate: step 2/3. Functionally, catalyzes the reversible conversion of 3-phosphohydroxypyruvate to phosphoserine and of 3-hydroxy-2-oxo-4-phosphonooxybutanoate to phosphohydroxythreonine. In Halalkalibacterium halodurans (strain ATCC BAA-125 / DSM 18197 / FERM 7344 / JCM 9153 / C-125) (Bacillus halodurans), this protein is Phosphoserine aminotransferase.